Here is a 690-residue protein sequence, read N- to C-terminus: SWI/SNF-related matrix-associated actin-dependent regulator of chromatin subfamily A-like protein 1 homolog (690 aa).

Positions 30 to 49 (MQAAANATASTSSAAPPAPP) are disordered. Low complexity predominate over residues 31-44 (QAAANATASTSSAA). In terms of domain architecture, HARP spans 92–170 (PTSLIKPTIG…AVKVELEPLP (79 aa)). Residues 209 to 367 (IFALERDGRI…FTQIRLIDHK (159 aa)) form the Helicase ATP-binding domain. Position 222–229 (222–229 (DEMGLGKS)) interacts with ATP. The DESH box motif lies at 316-319 (DESH). Residues 411 to 428 (RRLKADVLKDLPEKRREV) carry the Nuclear localization signal motif. One can recognise a Helicase C-terminal domain in the interval 482-639 (ILENYFYPDA…TFRTADKMHL (158 aa)).

The protein belongs to the SNF2/RAD54 helicase family. SMARCAL1 subfamily.

Its subcellular location is the nucleus. It carries out the reaction ATP + H2O = ADP + phosphate + H(+). ATP-dependent annealing helicase that catalyzes the rewinding of the stably unwound DNA. The protein is SWI/SNF-related matrix-associated actin-dependent regulator of chromatin subfamily A-like protein 1 homolog of Caenorhabditis elegans.